The following is a 416-amino-acid chain: 3-isopropylmalate dehydratase large subunit (416 aa).

Positions 297, 357, and 360 each coordinate [4Fe-4S] cluster.

This sequence belongs to the aconitase/IPM isomerase family. LeuC type 2 subfamily. As to quaternary structure, heterodimer of LeuC and LeuD. [4Fe-4S] cluster is required as a cofactor.

The enzyme catalyses (2R,3S)-3-isopropylmalate = (2S)-2-isopropylmalate. Its pathway is amino-acid biosynthesis; L-leucine biosynthesis; L-leucine from 3-methyl-2-oxobutanoate: step 2/4. Its function is as follows. Catalyzes the isomerization between 2-isopropylmalate and 3-isopropylmalate, via the formation of 2-isopropylmaleate. In Methanoregula boonei (strain DSM 21154 / JCM 14090 / 6A8), this protein is 3-isopropylmalate dehydratase large subunit.